A 529-amino-acid chain; its full sequence is Peptide chain release factor 3 (529 aa).

The tr-type G domain maps to 11-280 (AKRRTFAIIS…GLIEWAPQPM (270 aa)). GTP-binding positions include 20 to 27 (SHPDAGKT), 88 to 92 (DTPGH), and 142 to 145 (NKLD).

Belongs to the TRAFAC class translation factor GTPase superfamily. Classic translation factor GTPase family. PrfC subfamily.

It is found in the cytoplasm. Its function is as follows. Increases the formation of ribosomal termination complexes and stimulates activities of RF-1 and RF-2. It binds guanine nucleotides and has strong preference for UGA stop codons. It may interact directly with the ribosome. The stimulation of RF-1 and RF-2 is significantly reduced by GTP and GDP, but not by GMP. The sequence is that of Peptide chain release factor 3 from Enterobacter sp. (strain 638).